A 483-amino-acid polypeptide reads, in one-letter code: Probable zinc metalloprotease PTRG_04977 (483 aa).

The N-terminal stretch at 1–18 is a signal peptide; sequence MLFRSALLSNVLLLPACA. N-linked (GlcNAc...) asparagine glycosylation is found at Asn-96 and Asn-121. Zn(2+)-binding residues include His-167, Asp-187, and Glu-220. A glycan (N-linked (GlcNAc...) asparagine) is linked at Asn-235. Asp-247 contributes to the Zn(2+) binding site. Asn-310, Asn-362, Asn-401, Asn-411, and Asn-421 each carry an N-linked (GlcNAc...) asparagine glycan. The Fibronectin type-III domain maps to 396–483; it reads PAMPRNVTID…KSPAVYPFPG (88 aa).

This sequence belongs to the peptidase M28 family. M28B subfamily. The cofactor is Zn(2+).

It localises to the secreted. The protein is Probable zinc metalloprotease PTRG_04977 of Pyrenophora tritici-repentis (strain Pt-1C-BFP) (Wheat tan spot fungus).